A 694-amino-acid polypeptide reads, in one-letter code: ATP-binding cassette sub-family G member 8 (694 aa).

Residues 1–437 lie on the Cytoplasmic side of the membrane; sequence MAEKTKEETQ…ISNDFRDLPT (437 aa). Residues 91–335 form the ABC transporter domain; that stretch reads AQFKLPWRSR…FTSIGYPCPR (245 aa). An ABC transmembrane type-2 domain is found at 436–684; that stretch reads PTLFIHGAEA…FLSLYYLSLK (249 aa). Residues 438-458 traverse the membrane as a helical segment; sequence LFIHGAEACLMSLIIGFLYYG. The Extracellular portion of the chain corresponds to 459–468; sequence HADKPLSFMD. Residues 469-489 traverse the membrane as a helical segment; sequence MAALLFMIGALIPFNVILDVV. Residues 490 to 518 lie on the Cytoplasmic side of the membrane; sequence SKCHSERSLLYYELEDGLYTAGPYFFAKV. A helical transmembrane segment spans residues 519 to 539; that stretch reads LGELPEHCAYVIIYGMPIYWL. Topologically, residues 540 to 548 are extracellular; the sequence is TNLRPGPEL. Residues 549–569 form a helical membrane-spanning segment; it reads FLLHFMLLWLVVFCCRTMALA. Residues 570–576 are Cytoplasmic-facing; that stretch reads ASAMLPT. A helical membrane pass occupies residues 577–597; it reads FHMSSFCCNALYNSFYLTAGF. The Extracellular segment spans residues 598 to 660; the sequence is MINLNNLWIV…VTAMDLNSHP (63 aa). Asparagine 640 carries N-linked (GlcNAc...) asparagine glycosylation. The helical transmembrane segment at 661-681 threads the bilayer; the sequence is LYAIYLIVIGISCGFLSLYYL. At 682–694 the chain is on the cytoplasmic side; sequence SLKFIKQKSIQDW.

The protein belongs to the ABC transporter superfamily. ABCG family. Eye pigment precursor importer (TC 3.A.1.204) subfamily. Heterodimer with ABCG8. The cofactor is Mg(2+). Post-translationally, N-glycosylated. N-glycosylation is important for efficient export out of the endoplasmic reticulum. Highest expression in liver, with lower levels in small intestine and colon.

Its subcellular location is the cell membrane. The protein localises to the apical cell membrane. It catalyses the reaction cholesterol(in) + ATP + H2O = cholesterol(out) + ADP + phosphate + H(+). It carries out the reaction sitosterol(in) + ATP + H2O = sitosterol(out) + ADP + phosphate + H(+). Its function is as follows. ABCG5 and ABCG8 form an obligate heterodimer that mediates Mg(2+)- and ATP-dependent sterol transport across the cell membrane. Plays an essential role in the selective transport of the dietary cholesterol in and out of the enterocytes and in the selective sterol excretion by the liver into bile. Required for normal sterol homeostasis. The heterodimer with ABCG5 has ATPase activity. The chain is ATP-binding cassette sub-family G member 8 from Rattus norvegicus (Rat).